The following is a 366-amino-acid chain: MAVTGIVAEFNPFHYGHKYLLEQAEGLKIVAMSGNFVQRGEPAIVDKWTRAQMALENGADIVVELPFQVAVQSADYFAQGAVDILSTMGADTLAFGTEEDLDYSEIARIYEEKAEQMTAFLETLDDSLSYPQKTQKMWESFTGIDFSGNTPNHILALAYAKASAGKNLRLQPIKRQGAAYHSQEKNQMMASATAIRKHISDRTFVLQSTPSSELLLMAPQVNWENYFDLVRYHILSQEQLDHVFQVNQEIANRLKSAIVHVHSIEELVDKVSTKRYTKARVRRILTYILVNARENNLPNGVHVLGFTEKGQEHLKKMKKSISIVSRIGAVPWDQQTQTADRIYQLGHSDIKEQNFGRSPIRIEKLG.

Residues 7–20 (VAEFNPFHYGHKYL), Gly-96, Asn-152, and Arg-175 each bind ATP.

This sequence belongs to the TmcAL family.

Its subcellular location is the cytoplasm. The catalysed reaction is cytidine(34) in elongator tRNA(Met) + acetate + ATP = N(4)-acetylcytidine(34) in elongator tRNA(Met) + AMP + diphosphate. Its function is as follows. Catalyzes the formation of N(4)-acetylcytidine (ac(4)C) at the wobble position of elongator tRNA(Met), using acetate and ATP as substrates. First activates an acetate ion to form acetyladenylate (Ac-AMP) and then transfers the acetyl group to tRNA to form ac(4)C34. The chain is tRNA(Met) cytidine acetate ligase from Streptococcus uberis (strain ATCC BAA-854 / 0140J).